Consider the following 195-residue polypeptide: MSAANMPTTTGAQGSGNQVPRTSTTIVNHRELIKEPKNLDEAANYLFQTLLDDAVVGIFNETHHLRKSGNLAALDGVPEDSTYRMCEMPNLDIFGISTAKKPMDCTCPNCDRLVAAARFAPHLEKCMGMGRISSRIASRRLATKEGATSAHLHSSGNTGGTDDEDDVDWSSDKRRKKSNQNSRNNGSKKNNGKTF.

The interval 1 to 22 is disordered; sequence MSAANMPTTTGAQGSGNQVPRT. The segment at 105–126 adopts an SGF11-type zinc-finger fold; the sequence is CTCPNCDRLVAAARFAPHLEKC. Residues 140-195 form a disordered region; the sequence is RLATKEGATSAHLHSSGNTGGTDDEDDVDWSSDKRRKKSNQNSRNNGSKKNNGKTF. A Phosphoserine modification is found at S171. Low complexity predominate over residues 179-195; the sequence is NQNSRNNGSKKNNGKTF.

This sequence belongs to the SGF11 family. As to quaternary structure, component of some SAGA transcription coactivator-HAT complexes, at least composed of Ada2b, not/nonstop, Pcaf/Gcn5, Sgf11 and Spt3. Within the SAGA complex, Sgf11, e(y)2, and not/nonstop form an additional subcomplex of SAGA called the DUB module (deubiquitination module). Interacts directly with not/nonstop. Interacts with the AMEX complex component xmas-2. Interacts with Cbp80; important for promoter recruitment of Sgf11 that is not associated with the DUB module.

It localises to the nucleus. The protein localises to the nucleoplasm. It is found in the cytoplasm. Component of the transcription regulatory histone acetylation (HAT) complex SAGA, a multiprotein complex that activates transcription by remodeling chromatin and mediating histone acetylation and deubiquitination. Within the SAGA complex, participates in a subcomplex that specifically deubiquitinates histone H2B. The SAGA complex is recruited to specific gene promoters by activators, where it is required for transcription. Required for nuclear receptor-mediated transactivation. Binds independently on SAGA to promoters in an RNA-dependent manner. Binds to mRNA and is essential for total mRNA export from the nucleus. Required to counteract heterochromatin silencing. Controls the development of neuronal connectivity in visual system by being required for accurate axon targeting in the optic lobe. Required for expression of ecdysone-induced genes such as br/broad. The chain is SAGA-associated factor 11 homolog from Drosophila sechellia (Fruit fly).